The sequence spans 412 residues: Branched-chain alpha-ketoacid dehydrogenase kinase (412 aa).

The transit peptide at M1 to R30 directs the protein to the mitochondrion. The residue at position 31 (S31) is a Phosphoserine. S52 carries the post-translational modification Phosphoserine; by autocatalysis. Residues L159–D404 enclose the Histidine kinase domain. 2 positions are modified to N6-acetyllysine: K192 and K233. Residues N279 and D315 each contribute to the ATP site. N279 provides a ligand contact to Mg(2+). The K(+) site is built by V328, D330, and F333. T334 and T335 together coordinate ATP. 2 positions are modified to phosphoserine: S356 and S360. 3 residues coordinate ATP: H364, G367, and L370. G367 is a binding site for K(+).

The protein belongs to the PDK/BCKDK protein kinase family. As to quaternary structure, homodimer. Homotetramer. Dimerizes through interaction of two opposing nucleotide-binding domains. Interacts with E2 component of the branched-chain alpha-ketoacid dehydrogenase (BCKDH) complex. Competes with BCKDK for binding to the E2 component; this interaction is modulated by branched-chain alpha-keto acids. At steady state, BCKDH holoenzyme contains BCKDK and BCKDHA is phosphorylated. In response to high levels of branched-chain alpha-keto acids, the inhibitory BCKDK is replaced by activating PPM1K leading to BCKDHA dephosphorylation and BCAA degradation. Autophosphorylated. As to expression, ubiquitous.

It is found in the mitochondrion matrix. The enzyme catalyses L-seryl-[3-methyl-2-oxobutanoate dehydrogenase] + ATP = O-phospho-L-seryl-[3-methyl-2-oxobutanoate dehydrogenase] + ADP + H(+). It catalyses the reaction L-seryl-[protein] + ATP = O-phospho-L-seryl-[protein] + ADP + H(+). It participates in protein modification. Its activity is regulated as follows. Allosterically inhibited by certain thiazoles and thiophenes: thiazoles increase interaction with DBT/BCKDH-E2, whereas thiophenes reduce this interaction. Inhibited by 3,6- dichlorobenzo[b]thiophene-2-carboxylic acid (BT2). The ATP binding is mediated by both potassium and magnesium ions. In terms of biological role, serine/threonine-protein kinase component of macronutrients metabolism. Forms a functional kinase and phosphatase pair with PPM1K, serving as a metabolic regulatory node that coordinates branched-chain amino acids (BCAAs) with glucose and lipid metabolism via two distinct phosphoprotein targets: mitochondrial BCKDHA subunit of the branched-chain alpha-ketoacid dehydrogenase (BCKDH) complex and cytosolic ACLY, a lipogenic enzyme of Krebs cycle. Phosphorylates and inactivates mitochondrial BCKDH complex a multisubunit complex consisting of three multimeric components each involved in different steps of BCAA catabolism: E1 composed of BCKDHA and BCKDHB, E2 core composed of DBT monomers, and E3 composed of DLD monomers. Associates with the E2 component of BCKDH complex and phosphorylates BCKDHA on Ser-337, leading to conformational changes that interrupt substrate channeling between E1 and E2 and inactivates the BCKDH complex. Phosphorylates ACLY on Ser-455 in response to changes in cellular carbohydrate abundance such as occurs during fasting to feeding metabolic transition. Refeeding stimulates MLXIPL/ChREBP transcription factor, leading to increased BCKDK to PPM1K expression ratio, phosphorylation and activation of ACLY that ultimately results in the generation of malonyl-CoA and oxaloacetate immediate substrates of de novo lipogenesis and glucogenesis, respectively. Recognizes phosphosites having SxxE/D canonical motif. In Homo sapiens (Human), this protein is Branched-chain alpha-ketoacid dehydrogenase kinase.